The chain runs to 940 residues: Bifunctional uridylyltransferase/uridylyl-removing enzyme (940 aa).

The tract at residues M1–L379 is uridylyltransferase. The tract at residues D380–A736 is uridylyl-removing. The HD domain maps to V496–L618. 2 consecutive ACT domains span residues E737–G821 and V848–P929.

This sequence belongs to the GlnD family. Mg(2+) is required as a cofactor.

It catalyses the reaction [protein-PII]-L-tyrosine + UTP = [protein-PII]-uridylyl-L-tyrosine + diphosphate. The catalysed reaction is [protein-PII]-uridylyl-L-tyrosine + H2O = [protein-PII]-L-tyrosine + UMP + H(+). Its activity is regulated as follows. Uridylyltransferase (UTase) activity is inhibited by glutamine, while glutamine activates uridylyl-removing (UR) activity. Functionally, modifies, by uridylylation and deuridylylation, the PII regulatory proteins (GlnB and homologs), in response to the nitrogen status of the cell that GlnD senses through the glutamine level. Under low glutamine levels, catalyzes the conversion of the PII proteins and UTP to PII-UMP and PPi, while under higher glutamine levels, GlnD hydrolyzes PII-UMP to PII and UMP (deuridylylation). Thus, controls uridylylation state and activity of the PII proteins, and plays an important role in the regulation of nitrogen assimilation and metabolism. This Caulobacter vibrioides (strain ATCC 19089 / CIP 103742 / CB 15) (Caulobacter crescentus) protein is Bifunctional uridylyltransferase/uridylyl-removing enzyme.